The chain runs to 79 residues: Putative antitoxin VapB1 (79 aa).

Its function is as follows. Antitoxin component of a possible type II toxin-antitoxin (TA) system. The cognate toxin is VapC1. In Mycobacterium tuberculosis (strain ATCC 25618 / H37Rv), this protein is Putative antitoxin VapB1 (vapB1).